A 144-amino-acid chain; its full sequence is 3-hydroxyacyl-[acyl-carrier-protein] dehydratase FabZ (144 aa).

The active site involves H48.

Belongs to the thioester dehydratase family. FabZ subfamily.

Its subcellular location is the cytoplasm. The catalysed reaction is a (3R)-hydroxyacyl-[ACP] = a (2E)-enoyl-[ACP] + H2O. Functionally, involved in unsaturated fatty acids biosynthesis. Catalyzes the dehydration of short chain beta-hydroxyacyl-ACPs and long chain saturated and unsaturated beta-hydroxyacyl-ACPs. This Chloroflexus aggregans (strain MD-66 / DSM 9485) protein is 3-hydroxyacyl-[acyl-carrier-protein] dehydratase FabZ.